The following is a 386-amino-acid chain: 2-isopropylmalate synthase (386 aa).

The 255-residue stretch at 15–269 (IRIFDTTLRD…ETNVKTWKLY (255 aa)) folds into the Pyruvate carboxyltransferase domain. 4 residues coordinate a divalent metal cation: D24, H207, H209, and N243.

Belongs to the alpha-IPM synthase/homocitrate synthase family. As to quaternary structure, homodimer. It depends on a divalent metal cation as a cofactor.

It carries out the reaction 3-methyl-2-oxobutanoate + acetyl-CoA + H2O = (2S)-2-isopropylmalate + CoA + H(+). It participates in amino-acid biosynthesis; L-leucine biosynthesis; L-leucine from 3-methyl-2-oxobutanoate: step 1/4. Catalyzes the condensation of the acetyl group of acetyl-CoA with 3-methyl-2-oxobutanoate (2-oxoisovalerate) to form 3-carboxy-3-hydroxy-4-methylpentanoate (2-isopropylmalate). Carries out the first step of the leucine biosynthesis pathway. The chain is 2-isopropylmalate synthase (leuA) from Saccharolobus solfataricus (strain ATCC 35092 / DSM 1617 / JCM 11322 / P2) (Sulfolobus solfataricus).